The sequence spans 956 residues: Probable hypoxanthine oxidase XdhD (956 aa).

Mo-molybdopterin is bound by residues glutamine 414, phenylalanine 445, and alanine 727.

The protein belongs to the xanthine dehydrogenase family. It depends on [2Fe-2S] cluster as a cofactor. Requires Mo-molybdopterin as cofactor.

Probably has no xanthine dehydrogenase activity; however deletion results in increased adenine sensitivity, suggesting that this protein contributes to the conversion of adenine to guanine nucleotides during purine salvage. This Escherichia coli (strain K12) protein is Probable hypoxanthine oxidase XdhD (xdhD).